The sequence spans 330 residues: Phosphate acyltransferase (330 aa).

It belongs to the PlsX family. As to quaternary structure, homodimer. Probably interacts with PlsY.

The protein resides in the cytoplasm. It carries out the reaction a fatty acyl-[ACP] + phosphate = an acyl phosphate + holo-[ACP]. Its pathway is lipid metabolism; phospholipid metabolism. Functionally, catalyzes the reversible formation of acyl-phosphate (acyl-PO(4)) from acyl-[acyl-carrier-protein] (acyl-ACP). This enzyme utilizes acyl-ACP as fatty acyl donor, but not acyl-CoA. The protein is Phosphate acyltransferase of Streptococcus pneumoniae (strain 70585).